A 159-amino-acid polypeptide reads, in one-letter code: uncharacterized protein (159 aa).

To M.jannaschii MJECL20.

This is an uncharacterized protein from Methanocaldococcus jannaschii (strain ATCC 43067 / DSM 2661 / JAL-1 / JCM 10045 / NBRC 100440) (Methanococcus jannaschii).